Reading from the N-terminus, the 321-residue chain is Cytochrome f (321 aa).

An N-terminal signal peptide occupies residues 1 to 37 (MKIYRQIKQSFSITKIVFSFFISLLLNLVAQPTICQA). Residues Phe38, Cys58, Cys61, and His62 each contribute to the heme site. The helical transmembrane segment at 287 to 306 (VQGLIAFFISVVLAQIFLVL) threads the bilayer.

It belongs to the cytochrome f family. The 4 large subunits of the cytochrome b6-f complex are cytochrome b6, subunit IV (17 kDa polypeptide, petD), cytochrome f and the Rieske protein, while the 4 small subunits are PetG, PetL, PetM and PetN. The complex functions as a dimer. It depends on heme as a cofactor.

The protein localises to the plastid. The protein resides in the cyanelle thylakoid membrane. In terms of biological role, component of the cytochrome b6-f complex, which mediates electron transfer between photosystem II (PSII) and photosystem I (PSI), cyclic electron flow around PSI, and state transitions. This chain is Cytochrome f (petA), found in Cyanophora paradoxa.